Consider the following 681-residue polypeptide: Minichromosome maintenance domain-containing protein 2 (681 aa).

At Ser-292 the chain carries Phosphoserine. Positions 533–621 (KQFTTEDFEK…LIAALLFEIS (89 aa)) constitute an MCM domain.

Plays an important role in meiotic recombination and associated DNA double-strand break repair. This chain is Minichromosome maintenance domain-containing protein 2 (Mcmdc2), found in Rattus norvegicus (Rat).